We begin with the raw amino-acid sequence, 398 residues long: Nematocin receptor 2 (398 aa).

The Extracellular segment spans residues 1–25; it reads MNNNTLNITNQRTAAAMSQIYFLVV. N-linked (GlcNAc...) asparagine glycans are attached at residues Asn3 and Asn7. Residues 26 to 46 form a helical membrane-spanning segment; the sequence is YQTAVMIVSLLGNLFLLFVIF. The Cytoplasmic portion of the chain corresponds to 47–58; it reads RANQVMKRRVSP. A helical transmembrane segment spans residues 59–79; that stretch reads VQLLIIHTCVADLLFALLSLG. Residues 80 to 99 are Extracellular-facing; sequence TEILTLRTYPQYYGSNFVCK. Cys98 and Cys173 are oxidised to a cystine. The helical transmembrane segment at 100 to 120 threads the bilayer; that stretch reads LMRYVQMFPMYASPFLLVAIS. Residues 121–143 lie on the Cytoplasmic side of the membrane; it reads ADRYQAICRPLAHFRSSRYRRPN. A helical transmembrane segment spans residues 144-164; sequence WMAAIAWGLALVLSIPQFFVW. Topologically, residues 165–187 are extracellular; it reads TKHSKTGRCSTIYGQNKNTVKIT. A helical membrane pass occupies residues 188-208; it reads YVIMFNTLAWLLPSILAAVFY. The Cytoplasmic segment spans residues 209–271; it reads YCVCKAVRLS…DRKRVQTVRL (63 aa). Residues 272 to 292 form a helical membrane-spanning segment; that stretch reads TITIVACNFFLWMPFCLINVI. Residues 293-302 are Extracellular-facing; the sequence is QALWPEISHI. Residues 303-325 form a helical membrane-spanning segment; that stretch reads MFINYVAILGNLNSCLNPWIYIL. The Cytoplasmic segment spans residues 326-398; the sequence is FNRSHVRKAL…DSTSLKTNSN (73 aa).

It belongs to the G-protein coupled receptor 1 family. Vasopressin/oxytocin receptor subfamily. As to expression, detected in the ADL sensory neurons, the RMED and RMEV motor neurons, and the PQR tail neuron. In males, detected in SPC tail neurons involved in spicule penetration and sperm transfer, and male-specific oblique muscles involved in vulval contact.

It localises to the cell membrane. Not directly activated by nematocin. May modulate activity of the nematocin receptor ntr-1, leading to reduced intracellular cAMP production. Plays a role in male mating behavior. The chain is Nematocin receptor 2 from Caenorhabditis elegans.